Consider the following 211-residue polypeptide: Beta-crystallin B3 (211 aa).

The disordered stretch occupies residues methionine 1–glycine 21. The N-terminal arm stretch occupies residues methionine 1–asparagine 23. Beta/gamma crystallin 'Greek key' domains lie at tyrosine 24–serine 63 and glycine 64–glutamine 108. A connecting peptide region spans residues isoleucine 109–aspartate 113. Beta/gamma crystallin 'Greek key' domains are found at residues histidine 114–asparagine 155 and glycine 156–arginine 198. A C-terminal arm region spans residues glutamine 200–serine 211.

This sequence belongs to the beta/gamma-crystallin family. Homo/heterodimer, or complexes of higher-order. The structure of beta-crystallin oligomers seems to be stabilized through interactions between the N-terminal arms.

Functionally, crystallins are the dominant structural components of the vertebrate eye lens. The protein is Beta-crystallin B3 (CRYBB3) of Gallus gallus (Chicken).